A 100-amino-acid polypeptide reads, in one-letter code: Large ribosomal subunit protein uL23 (100 aa).

Belongs to the universal ribosomal protein uL23 family. In terms of assembly, part of the 50S ribosomal subunit. Contacts protein L29, and trigger factor when it is bound to the ribosome.

One of the early assembly proteins it binds 23S rRNA. One of the proteins that surrounds the polypeptide exit tunnel on the outside of the ribosome. Forms the main docking site for trigger factor binding to the ribosome. The sequence is that of Large ribosomal subunit protein uL23 from Lactobacillus acidophilus (strain ATCC 700396 / NCK56 / N2 / NCFM).